Reading from the N-terminus, the 468-residue chain is UDP-N-acetylmuramate--L-alanine ligase (468 aa).

112–118 (GTHGKTT) serves as a coordination point for ATP.

It belongs to the MurCDEF family.

Its subcellular location is the cytoplasm. It catalyses the reaction UDP-N-acetyl-alpha-D-muramate + L-alanine + ATP = UDP-N-acetyl-alpha-D-muramoyl-L-alanine + ADP + phosphate + H(+). Its pathway is cell wall biogenesis; peptidoglycan biosynthesis. Its function is as follows. Cell wall formation. The protein is UDP-N-acetylmuramate--L-alanine ligase of Neisseria meningitidis serogroup C (strain 053442).